The sequence spans 275 residues: Dermonecrotic toxin SpeSicTox-betaIIA3ii (275 aa).

Residue His5 is part of the active site. Mg(2+) is bound by residues Glu25 and Asp27. The active-site Nucleophile is His41. 2 disulfides stabilise this stretch: Cys45/Cys51 and Cys47/Cys190. Asp85 is a binding site for Mg(2+).

It belongs to the arthropod phospholipase D family. Class II subfamily. The cofactor is Mg(2+). In terms of tissue distribution, expressed by the venom gland.

The protein resides in the secreted. It catalyses the reaction an N-(acyl)-sphingosylphosphocholine = an N-(acyl)-sphingosyl-1,3-cyclic phosphate + choline. The catalysed reaction is an N-(acyl)-sphingosylphosphoethanolamine = an N-(acyl)-sphingosyl-1,3-cyclic phosphate + ethanolamine. It carries out the reaction a 1-acyl-sn-glycero-3-phosphocholine = a 1-acyl-sn-glycero-2,3-cyclic phosphate + choline. The enzyme catalyses a 1-acyl-sn-glycero-3-phosphoethanolamine = a 1-acyl-sn-glycero-2,3-cyclic phosphate + ethanolamine. Its function is as follows. Dermonecrotic toxins cleave the phosphodiester linkage between the phosphate and headgroup of certain phospholipids (sphingolipid and lysolipid substrates), forming an alcohol (often choline) and a cyclic phosphate. This toxin acts on sphingomyelin (SM). It may also act on ceramide phosphoethanolamine (CPE), lysophosphatidylcholine (LPC) and lysophosphatidylethanolamine (LPE), but not on lysophosphatidylserine (LPS), and lysophosphatidylglycerol (LPG). It acts by transphosphatidylation, releasing exclusively cyclic phosphate products as second products. Induces dermonecrosis, hemolysis, increased vascular permeability, edema, inflammatory response, and platelet aggregation. The sequence is that of Dermonecrotic toxin SpeSicTox-betaIIA3ii from Sicarius peruensis (Six-eyed sand spider).